We begin with the raw amino-acid sequence, 292 residues long: Elongation factor Ts (292 aa).

An involved in Mg(2+) ion dislocation from EF-Tu region spans residues T79 to V82.

Belongs to the EF-Ts family.

It localises to the cytoplasm. In terms of biological role, associates with the EF-Tu.GDP complex and induces the exchange of GDP to GTP. It remains bound to the aminoacyl-tRNA.EF-Tu.GTP complex up to the GTP hydrolysis stage on the ribosome. This chain is Elongation factor Ts, found in Malacoplasma penetrans (strain HF-2) (Mycoplasma penetrans).